We begin with the raw amino-acid sequence, 301 residues long: MKIKLILVLIVFLTIVNVNNSIDLCLSNPKKALVNQACKYSTDCEYPLFCGSGNGYGKNATCSKNIETGGSCESNNQCTPCNVCFNAKCKVKLYLGDACDENKSYCSSSVCIKGKCSIQGDVCTANNQCKFNNYCKSGKCVPLEKEGSSCDKDSSCSLTNACVGGKCVTKYQKPLGAVCNSSNECQVFSGHVCGANGKCSVYNQLLSKCKENSDCGPNGMCMCKSETENVCVDLSVGALKNDKCPSLLSSFSSCMTRERCTENTPTGCPKCYPIFMCYQYSCFYMNQFIRSTQNYYKSFCS.

Residues 1–21 (MKIKLILVLIVFLTIVNVNNS) form the signal peptide. N19, N59, N102, and N180 each carry an N-linked (GlcNAc...) asparagine glycan.

It localises to the secreted. This is an uncharacterized protein from Dictyostelium discoideum (Social amoeba).